A 900-amino-acid polypeptide reads, in one-letter code: Alpha-actinin-3 (900 aa).

Met1 is subject to N-acetylmethionine. The tract at residues 1-26 (MMMVMQPEGLGAGEGPFSGGGGGEYM) is disordered. Positions 1-260 (MMMVMQPEGL…IMTYVSCFYH (260 aa)) are actin-binding. Gly residues predominate over residues 10-24 (LGAGEGPFSGGGGGE). Calponin-homology (CH) domains lie at 44–148 (KQQR…LRFA) and 157–263 (TSAK…HAFA). Spectrin repeat units lie at residues 287-397 (KLME…WLLS), 407-512 (HLAE…ALER), 522-633 (QLQL…TLQE), and 643-746 (RLRR…EVEN). 2 consecutive EF-hand domains span residues 759-794 (EQLN…MGYD) and 795-830 (LGEV…ETAE). Residues Asp772, Asn776, Met778, Asp783, Asp808, and Asn810 each coordinate Ca(2+).

This sequence belongs to the alpha-actinin family. In terms of assembly, homodimer; antiparallel. Also forms heterodimers with ACTN2. Interacts with MYOZ1. In terms of tissue distribution, expression restricted to skeletal muscle fast (type 2) fibers (at protein level).

F-actin cross-linking protein which is thought to anchor actin to a variety of intracellular structures. This is a bundling protein. The sequence is that of Alpha-actinin-3 (Actn3) from Mus musculus (Mouse).